A 232-amino-acid polypeptide reads, in one-letter code: Large ribosomal subunit protein uL1 (232 aa).

This sequence belongs to the universal ribosomal protein uL1 family. Part of the 50S ribosomal subunit.

In terms of biological role, binds directly to 23S rRNA. The L1 stalk is quite mobile in the ribosome, and is involved in E site tRNA release. Its function is as follows. Protein L1 is also a translational repressor protein, it controls the translation of the L11 operon by binding to its mRNA. The polypeptide is Large ribosomal subunit protein uL1 (Rhizobium rhizogenes (strain K84 / ATCC BAA-868) (Agrobacterium radiobacter)).